The following is a 536-amino-acid chain: Phosphoenolpyruvate carboxykinase (ATP) (536 aa).

The substrate site is built by Arg-61, Tyr-195, and Lys-201. ATP is bound by residues Lys-201, His-220, and 236–244; that span reads GLSGTGKTT. Mn(2+) is bound by residues Lys-201 and His-220. Asp-257 lines the Mn(2+) pocket. ATP-binding residues include Glu-285, Arg-322, and Thr-447. Arg-322 lines the substrate pocket.

It belongs to the phosphoenolpyruvate carboxykinase (ATP) family. It depends on Mn(2+) as a cofactor.

Its subcellular location is the cytoplasm. It catalyses the reaction oxaloacetate + ATP = phosphoenolpyruvate + ADP + CO2. The protein operates within carbohydrate biosynthesis; gluconeogenesis. Functionally, involved in the gluconeogenesis. Catalyzes the conversion of oxaloacetate (OAA) to phosphoenolpyruvate (PEP) through direct phosphoryl transfer between the nucleoside triphosphate and OAA. This chain is Phosphoenolpyruvate carboxykinase (ATP), found in Rhizobium rhizogenes (strain K84 / ATCC BAA-868) (Agrobacterium radiobacter).